The sequence spans 151 residues: UPF0561 protein C2orf68 homolog (151 aa).

Residues 1–89 (MEEEGEAQGR…TLKDEPNDNG (89 aa)) are disordered. Basic and acidic residues-rich tracts occupy residues 32–46 (LARD…QAKE) and 70–85 (RQRE…KDEP).

It belongs to the UPF0561 family.

This is UPF0561 protein C2orf68 homolog from Xenopus laevis (African clawed frog).